A 692-amino-acid chain; its full sequence is Elongation factor G (692 aa).

Residues 8–283 (NRIRNIGIAA…AVIDYLPAPT (276 aa)) form the tr-type G domain. GTP-binding positions include 17-24 (AHIDAGKT), 81-85 (DTPGH), and 135-138 (NKMD).

The protein belongs to the TRAFAC class translation factor GTPase superfamily. Classic translation factor GTPase family. EF-G/EF-2 subfamily.

Its subcellular location is the cytoplasm. In terms of biological role, catalyzes the GTP-dependent ribosomal translocation step during translation elongation. During this step, the ribosome changes from the pre-translocational (PRE) to the post-translocational (POST) state as the newly formed A-site-bound peptidyl-tRNA and P-site-bound deacylated tRNA move to the P and E sites, respectively. Catalyzes the coordinated movement of the two tRNA molecules, the mRNA and conformational changes in the ribosome. The polypeptide is Elongation factor G (Helicobacter pylori (strain P12)).